The sequence spans 312 residues: Methionyl-tRNA formyltransferase (312 aa).

(6S)-5,6,7,8-tetrahydrofolate is bound at residue 109–112 (SLLP).

The protein belongs to the Fmt family.

The catalysed reaction is L-methionyl-tRNA(fMet) + (6R)-10-formyltetrahydrofolate = N-formyl-L-methionyl-tRNA(fMet) + (6S)-5,6,7,8-tetrahydrofolate + H(+). In terms of biological role, attaches a formyl group to the free amino group of methionyl-tRNA(fMet). The formyl group appears to play a dual role in the initiator identity of N-formylmethionyl-tRNA by promoting its recognition by IF2 and preventing the misappropriation of this tRNA by the elongation apparatus. The protein is Methionyl-tRNA formyltransferase of Listeria monocytogenes serovar 1/2a (strain ATCC BAA-679 / EGD-e).